Consider the following 436-residue polypeptide: AMSH-like protease (436 aa).

Met-1 bears the N-acetylmethionine mark. Residues Ser-25 and Ser-242 each carry the phosphoserine modification. The region spanning 269–397 is the MPN domain; that stretch reads VVLSRDLCHK…IFRLTNAGML (129 aa). Positions 347, 349, 360, 362, 402, 408, and 410 each coordinate Zn(2+). The short motif at 347-360 is the JAMM motif element; that stretch reads HTHPTQTAFLSSVD.

It belongs to the peptidase M67C family. It depends on Zn(2+) as a cofactor. In terms of tissue distribution, ubiquitously expressed. Isoform 1 is widely expressed while isoform 2 is testis-specific.

Zinc metalloprotease that specifically cleaves 'Lys-63'-linked polyubiquitin chains. Acts as a positive regulator of the TORC1 signaling pathway by mediating 'Lys-63'-linked deubiquitination of SESN2, thereby inhibiting SESN2-interaction with the GATOR2 complex. Does not cleave 'Lys-48'-linked polyubiquitin chains. The chain is AMSH-like protease (Stambpl1) from Mus musculus (Mouse).